The following is a 518-amino-acid chain: Sensor protein kinase HptS (518 aa).

2 helical membrane-spanning segments follow: residues 20 to 40 (IFPV…IYIW) and 222 to 242 (GITL…FGFI). A Histidine kinase domain is found at 297–513 (EQLIHSIEHT…LICYKIPLSR (217 aa)). His-325 carries the phosphohistidine; by autocatalysis modification.

In terms of processing, autophosphorylated.

The protein localises to the cell membrane. It carries out the reaction ATP + protein L-histidine = ADP + protein N-phospho-L-histidine.. Functionally, member of the two-component regulatory system HptS/HptR that regulates genes involved in hexose phosphate transport system in response to changes in extracellular phosphate sources. May act as a sensor protein kinase which is autophosphorylated at a histidine residue and transfers its phosphate group to the conserved aspartic acid residue in the regulatory domain of HptS. In turn, HptS antagonizes CcpA-dependent transcription of a subset of CcpA-regulated genes involved in antibiotic susceptibility. This chain is Sensor protein kinase HptS (hptS), found in Staphylococcus aureus (strain Mu50 / ATCC 700699).